Consider the following 129-residue polypeptide: MYFLYVGIFGALGGMCRYAMNLWLGGGDFPSATLAVNLIGCFLLAFIMPFLAEKSRISLVLLNGIGTGFIGAFTTFSAFSVDTIELLQQGEVVLAISYILVSLIGGLVMVKFGRRFSNKLLRRGAHHVD.

Helical transmembrane passes span 3–23, 32–52, 59–79, and 90–110; these read FLYVGIFGALGGMCRYAMNLW, ATLAVNLIGCFLLAFIMPFLA, LVLLNGIGTGFIGAFTTFSAF, and GEVVLAISYILVSLIGGLVMV. Na(+)-binding residues include Gly71 and Thr74.

This sequence belongs to the fluoride channel Fluc/FEX (TC 1.A.43) family.

It localises to the cell membrane. The enzyme catalyses fluoride(in) = fluoride(out). With respect to regulation, na(+) is not transported, but it plays an essential structural role and its presence is essential for fluoride channel function. Its function is as follows. Fluoride-specific ion channel. Important for reducing fluoride concentration in the cell, thus reducing its toxicity. This is Fluoride-specific ion channel FluC 2 from Listeria innocua serovar 6a (strain ATCC BAA-680 / CLIP 11262).